Reading from the N-terminus, the 2297-residue chain is Xin actin-binding repeat-containing protein 1 (2297 aa).

The span at 1 to 11 (MAEVAKQKKAT) shows a compositional bias: basic and acidic residues. The interval 1–28 (MAEVAKQKKATEAVCGDEDFPPPPPPLP) is disordered. Xin repeat units lie at residues 104-119 (GEVQ…WTLD), 139-154 (GDVK…STFD), 169-184 (GDVR…QPLD), 208-223 (GDVT…KPLD), 248-263 (GDVK…DPCC), 286-301 (SDFK…QPLD), 323-338 (GGVD…QPLD), 362-377 (ADVH…QPLS), and 396-411 (GNVG…QPMD). Over residues 433–442 (GEVQDKRMQF) the composition is skewed to basic and acidic residues. A disordered region spans residues 433–461 (GEVQDKRMQFEKSTAGKTAGDSGNKVQND). 14 Xin repeats span residues 464-479 (GDVK…LPLN), 494-509 (GDVK…TPLY), 532-547 (GNVQ…RPLD), 570-585 (DDTR…QPLD), 605-620 (SNVK…KPMD), 638-653 (ADVK…QPLD), 677-692 (VNVK…EPLD), 715-730 (GDVS…KSLG), 747-762 (GSVH…QPIG), 779-794 (GDVG…LSLD), 818-833 (VNVK…QPLY), 856-871 (GDVR…KPLD), 893-908 (GDVK…QPLD), and 928-943 (KCVQ…EQAS). Ser-952 carries the phosphoserine modification. 3 Xin repeats span residues 959–974 (GDVR…QPID), 997–1012 (GDVK…QSLD), and 1033–1048 (ADVK…TPLD). Disordered stretches follow at residues 1617–1680 (PSSH…KDQK), 1866–1900 (KENI…VPSI), 2147–2191 (SAAR…PRRK), and 2243–2297 (ELSS…TEKH). Low complexity-rich tracts occupy residues 1618–1630 (SSHT…VSVT) and 1644–1656 (SVSS…KNSS). Composition is skewed to basic and acidic residues over residues 1876–1885 (SNKDELHFTS) and 2151–2162 (KPAESPTDKPKT). The segment covering 2166-2180 (QSNAGSSSSQNSSAS) has biased composition (low complexity). Polar residues predominate over residues 2259–2278 (GMTSPVLQRSGQSFSSNSLS).

The protein belongs to the Xin family. In terms of tissue distribution, expressed at intercalated disks in the heart (at protein level).

The protein resides in the cell junction. It is found in the adherens junction. Its subcellular location is the desmosome. Its function is as follows. Positively regulates organization of the outer plexiform layer and Muller glia cells in the retina. May protect actin filaments from depolymerization. May play a role in development of normal skeletal muscle morphology and muscle fiber type composition. This Danio rerio (Zebrafish) protein is Xin actin-binding repeat-containing protein 1.